We begin with the raw amino-acid sequence, 333 residues long: tRNA dimethylallyltransferase (333 aa).

Position 16 to 23 (16 to 23 (GPTASGKT)) interacts with ATP. A substrate-binding site is contributed by 18 to 23 (TASGKT). 3 interaction with substrate tRNA regions span residues 41 to 44 (DSAL), 165 to 169 (QRISR), and 253 to 258 (RCVGYR).

The protein belongs to the IPP transferase family. As to quaternary structure, monomer. It depends on Mg(2+) as a cofactor.

It catalyses the reaction adenosine(37) in tRNA + dimethylallyl diphosphate = N(6)-dimethylallyladenosine(37) in tRNA + diphosphate. In terms of biological role, catalyzes the transfer of a dimethylallyl group onto the adenine at position 37 in tRNAs that read codons beginning with uridine, leading to the formation of N6-(dimethylallyl)adenosine (i(6)A). The sequence is that of tRNA dimethylallyltransferase from Polaromonas sp. (strain JS666 / ATCC BAA-500).